Reading from the N-terminus, the 135-residue chain is Cytochrome c-type biogenesis protein CcmE (135 aa).

Residues 1–8 lie on the Cytoplasmic side of the membrane; that stretch reads MLLLRWKR. A helical; Signal-anchor for type II membrane protein transmembrane segment spans residues 9-29; the sequence is FWFLSLGILLFSGVVSLMLFN. The Periplasmic segment spans residues 30-135; sequence LSESISFFYL…EDFIKSVRGE (106 aa). Histidine 118 and tyrosine 122 together coordinate heme.

Belongs to the CcmE/CycJ family.

Its subcellular location is the cell inner membrane. Functionally, heme chaperone required for the biogenesis of c-type cytochromes. Transiently binds heme delivered by CcmC and transfers the heme to apo-cytochromes in a process facilitated by CcmF and CcmH. The sequence is that of Cytochrome c-type biogenesis protein CcmE from Neorickettsia sennetsu (strain ATCC VR-367 / Miyayama) (Ehrlichia sennetsu).